The following is a 150-amino-acid chain: MGIEIQTKPFGKMQVSERQILSFPEGLLGFEEYKKFALIEEEEESVFKWLQSTEEVDLAFVVIPPSLFKKEYKPLIPEQELLGIGINEIKESLTLVIVTVPGEDPSMMTANTQGPILINKETLIGKQFISRNESHSVREKIFESAAVEIG.

This sequence belongs to the FliW family. In terms of assembly, interacts with translational regulator CsrA and flagellin(s).

It localises to the cytoplasm. Functionally, acts as an anti-CsrA protein, binds CsrA and prevents it from repressing translation of its target genes, one of which is flagellin. Binds to flagellin and participates in the assembly of the flagellum. The polypeptide is Flagellar assembly factor FliW (Leptospira interrogans serogroup Icterohaemorrhagiae serovar copenhageni (strain Fiocruz L1-130)).